Consider the following 318-residue polypeptide: Deoxymugineic acid synthase 1 (318 aa).

D48 serves as a coordination point for NADP(+). The active-site Proton donor is the Y53. H116 lines the substrate pocket. Residues 162 to 163 (CN), Q184, 262 to 270 (FDEARMREN), and 277 to 285 (ELTEEERQR) contribute to the NADP(+) site.

Belongs to the aldo/keto reductase family. As to expression, confined to cells participating in long distance transport (e.g. in the parts of pericycle cells adjacent to the protoxylem and metaxylem) in roots and to vascular bundles in shoots.

The enzyme catalyses 2'-deoxymugineate + NAD(+) = 3''-deamino-3''-oxonicotianamine + NADH + H(+). It catalyses the reaction 2'-deoxymugineate + NADP(+) = 3''-deamino-3''-oxonicotianamine + NADPH + H(+). It functions in the pathway siderophore biosynthesis. Catalyzes the reduction of a 3''-keto intermediate during the biosynthesis of 2'-deoxymugineic acid (DMA) from L-Met. Involved in the formation of phytosiderophores (MAs) belonging to the mugineic acid family and required to acquire iron. The chain is Deoxymugineic acid synthase 1 from Oryza sativa subsp. japonica (Rice).